Here is a 490-residue protein sequence, read N- to C-terminus: Muscarinic acetylcholine receptor M4 (490 aa).

At 1–42 (MHNLSAQPWQAKMANLTYDNVTLSNRSEVAIQPPTNYKTVEL) the chain is on the extracellular side. N-linked (GlcNAc...) asparagine glycans are attached at residues N3, N15, N20, and N25. Residues 43–64 (VFIATVTGSLSLVTVVGNILVM) form a helical membrane-spanning segment. Residues 65–78 (LSIKVNRQLQTVNN) are Cytoplasmic-facing. The chain crosses the membrane as a helical span at residues 79-99 (YFLFSLACADLIIGVFSMNLY). The Extracellular segment spans residues 100–116 (TVYIIKGYWPLGAVVCD). A disulfide bridge connects residues C115 and C195. A helical membrane pass occupies residues 117–138 (LWLALDYVVSNASVMNLLIISF). At 139 to 158 (DRYFCVTKPLTYPARRTTKM) the chain is on the cytoplasmic side. The chain crosses the membrane as a helical span at residues 159–181 (AGLMIAAAWILSFILWAPAILFW). The Extracellular portion of the chain corresponds to 182–203 (QFIVGKRTVHERECYIQFLSNP). Residues 204 to 226 (AVTFGTAIAAFYLPVVIMTVLYI) form a helical membrane-spanning segment. Residues 227 to 412 (HISLASRSRV…AAREKKVTRT (186 aa)) lie on the Cytoplasmic side of the membrane. The segment covering 236 to 250 (VRRHKPESRKERKGK) has biased composition (basic residues). A disordered region spans residues 236-343 (VRRHKPESRK…HPRVNPTSKW (108 aa)). Over residues 270-285 (RAVEVKEEVRNGKVDD) the composition is skewed to basic and acidic residues. 2 stretches are compositionally biased toward polar residues: residues 287-296 (PSAQTEATGQ) and 304-314 (NESSTVSMTQT). A helical membrane pass occupies residues 413-433 (IFAILLAFILTWTPYNVMVLI). Topologically, residues 434 to 447 (NTFCETCVPETVWS) are extracellular. A helical membrane pass occupies residues 448–467 (IGYWLCYVNSTINPACYALC). The Cytoplasmic segment spans residues 468–490 (NATFKKTFKHLLMCQYRNIGTAR).

The protein belongs to the G-protein coupled receptor 1 family. Muscarinic acetylcholine receptor subfamily. CHRM4 sub-subfamily. In terms of tissue distribution, expressed in heart and brain.

It is found in the cell membrane. Its subcellular location is the postsynaptic cell membrane. The muscarinic acetylcholine receptor mediates various cellular responses, including inhibition of adenylate cyclase, breakdown of phosphoinositides and modulation of potassium channels through the action of G proteins. Primary transducing effect is inhibition of adenylate cyclase. May couple to multiple functional responses in cell lines. The polypeptide is Muscarinic acetylcholine receptor M4 (CHRM4) (Gallus gallus (Chicken)).